We begin with the raw amino-acid sequence, 125 residues long: MRIAGVNLPLNKHAVIALTHVYGIGRTSAENILQRAGIAPERKISELNDEEAHAIREIIAEDYKVEGQARGEQQTAIKRLMDIGCYRGLRHRRSLPVRGQRTQTNARTRKGKRKTVAGKKKATKK.

A disordered region spans residues 92 to 125 (RRSLPVRGQRTQTNARTRKGKRKTVAGKKKATKK). Residues 107–125 (RTRKGKRKTVAGKKKATKK) show a composition bias toward basic residues.

Belongs to the universal ribosomal protein uS13 family. As to quaternary structure, part of the 30S ribosomal subunit. Forms a loose heterodimer with protein S19. Forms two bridges to the 50S subunit in the 70S ribosome.

Functionally, located at the top of the head of the 30S subunit, it contacts several helices of the 16S rRNA. In the 70S ribosome it contacts the 23S rRNA (bridge B1a) and protein L5 of the 50S subunit (bridge B1b), connecting the 2 subunits; these bridges are implicated in subunit movement. Contacts the tRNAs in the A and P-sites. The polypeptide is Small ribosomal subunit protein uS13 (Chlorobium limicola (strain DSM 245 / NBRC 103803 / 6330)).